The sequence spans 319 residues: Cytochrome c biogenesis protein CcsA (319 aa).

Helical transmembrane passes span 14–34, 46–66, 74–94, 97–117, and 142–162; these read AFAV…FPQW, AIAN…GGYF, SLFF…SISG, LVGV…ALSL, and VMML…ALLV. The tract at residues 175–201 is disordered; sequence SVGTGSFRSRRPEPSLEASTGNGGTTV. Polar residues predominate over residues 191–201; sequence EASTGNGGTTV. The next 3 helical transmembrane spans lie at 227-247, 254-274, and 288-308; these read MIGL…VWAN, WSWD…AAYL, and AILA…VNLL.

It belongs to the CcmF/CycK/Ccl1/NrfE/CcsA family. In terms of assembly, may interact with ccs1.

The protein localises to the cellular thylakoid membrane. In terms of biological role, required during biogenesis of c-type cytochromes (cytochrome c6 and cytochrome f) at the step of heme attachment. The polypeptide is Cytochrome c biogenesis protein CcsA (Thermosynechococcus vestitus (strain NIES-2133 / IAM M-273 / BP-1)).